Here is a 277-residue protein sequence, read N- to C-terminus: F420-dependent methylenetetrahydromethanopterin dehydrogenase (277 aa).

Belongs to the MTD family.

The catalysed reaction is 5,10-methylenetetrahydromethanopterin + oxidized coenzyme F420-(gamma-L-Glu)(n) + 2 H(+) = 5,10-methenyl-5,6,7,8-tetrahydromethanopterin + reduced coenzyme F420-(gamma-L-Glu)(n). It functions in the pathway one-carbon metabolism; methanogenesis from CO(2); 5,10-methylene-5,6,7,8-tetrahydromethanopterin from 5,10-methenyl-5,6,7,8-tetrahydromethanopterin (coenzyme F420 route): step 1/1. Functionally, catalyzes the reversible reduction of methenyl-H(4)MPT(+) to methylene-H(4)MPT. The sequence is that of F420-dependent methylenetetrahydromethanopterin dehydrogenase from Methanococcus maripaludis (strain C5 / ATCC BAA-1333).